We begin with the raw amino-acid sequence, 357 residues long: Quinolinate synthase (357 aa).

Iminosuccinate-binding residues include histidine 50 and serine 71. Cysteine 116 is a [4Fe-4S] cluster binding site. Residues 142–144 and serine 159 contribute to the iminosuccinate site; that span reads YAN. Cysteine 203 serves as a coordination point for [4Fe-4S] cluster. Iminosuccinate-binding positions include 229–231 and threonine 246; that span reads HPE. Cysteine 300 provides a ligand contact to [4Fe-4S] cluster.

The protein belongs to the quinolinate synthase family. Type 1 subfamily. The cofactor is [4Fe-4S] cluster.

Its subcellular location is the cytoplasm. The catalysed reaction is iminosuccinate + dihydroxyacetone phosphate = quinolinate + phosphate + 2 H2O + H(+). Its pathway is cofactor biosynthesis; NAD(+) biosynthesis; quinolinate from iminoaspartate: step 1/1. Functionally, catalyzes the condensation of iminoaspartate with dihydroxyacetone phosphate to form quinolinate. This Shewanella oneidensis (strain ATCC 700550 / JCM 31522 / CIP 106686 / LMG 19005 / NCIMB 14063 / MR-1) protein is Quinolinate synthase.